The chain runs to 603 residues: Glutathione-regulated potassium-efflux system protein KefB (603 aa).

13 helical membrane passes run 5 to 25 (ALLTAGVLFLFVAVVAVPIAA), 29 to 49 (IGAVLGYLIAGIAIGPWGLGF), 55 to 75 (AILHFSELGVVFLMFIIGLEL), 87 to 107 (IFGVGAAQVGLSTLLLGGALY), 115 to 135 (SALIGGVGLAMSSTAMALQLM), 152 to 172 (VLLFQDLAVIPALALIPILAG), 180 to 202 (WERIGLKVAAFLGMLIGGRYLVR), 207 to 227 (FIAASGVREVFTAAALLLVLG), 230 to 250 (LFMETLGLSMALGTFIAGILL), 268 to 288 (GLLLGLFFISVGMALNLGILY), 291 to 311 (IVKIMVAVLVLVAVKAAVLYF), 326 to 346 (FAGVLSQGGEFAFVLFSAAAS), and 356 to 376 (PLLLVTVTLSMMTTPLLMQLI). The region spanning 400-521 (EPQVIVVGFG…VRHFSRETFS (122 aa)) is the RCK N-terminal domain.

Belongs to the monovalent cation:proton antiporter 2 (CPA2) transporter (TC 2.A.37) family. KefB subfamily. Interacts with the regulatory subunit KefG.

It localises to the cell inner membrane. Functionally, pore-forming subunit of a potassium efflux system that confers protection against electrophiles. Catalyzes K(+)/H(+) antiport. In Pectobacterium carotovorum subsp. carotovorum (strain PC1), this protein is Glutathione-regulated potassium-efflux system protein KefB.